The primary structure comprises 429 residues: Adenylosuccinate synthetase (429 aa).

GTP contacts are provided by residues 12–18 (GDEGKGK) and 40–42 (GHT). Residue Asp13 is the Proton acceptor of the active site. Residues Asp13 and Gly40 each coordinate Mg(2+). IMP is bound by residues 13-16 (DEGK), 38-41 (NAGH), Thr128, Arg142, Gln223, Thr238, and Arg302. Residue His41 is the Proton donor of the active site. 298-304 (TVTGRPR) contacts substrate. Residues Arg304, 330–332 (LLD), and 412–414 (SVG) contribute to the GTP site.

The protein belongs to the adenylosuccinate synthetase family. Homodimer. It depends on Mg(2+) as a cofactor.

Its subcellular location is the cytoplasm. It catalyses the reaction IMP + L-aspartate + GTP = N(6)-(1,2-dicarboxyethyl)-AMP + GDP + phosphate + 2 H(+). The protein operates within purine metabolism; AMP biosynthesis via de novo pathway; AMP from IMP: step 1/2. Plays an important role in the de novo pathway of purine nucleotide biosynthesis. Catalyzes the first committed step in the biosynthesis of AMP from IMP. The polypeptide is Adenylosuccinate synthetase (Lactobacillus johnsonii (strain CNCM I-12250 / La1 / NCC 533)).